The primary structure comprises 101 residues: A-type ATP synthase subunit F (101 aa).

Belongs to the V-ATPase F subunit family. Has multiple subunits, A(3), B(3), C, D, E, F, G, I and K(x); there may be a few other subunits as well.

Its subcellular location is the cell membrane. Component of the A-type ATP synthase that produces ATP from ADP in the presence of a proton gradient across the membrane. The chain is A-type ATP synthase subunit F from Methanosarcina mazei (strain ATCC BAA-159 / DSM 3647 / Goe1 / Go1 / JCM 11833 / OCM 88) (Methanosarcina frisia).